Here is a 151-residue protein sequence, read N- to C-terminus: MKIILRKEVSSLGLQGEVVTVKDGYARNFLIPNGLAIRATEGAIKAIETEKKQRAFKIEKERKAARELADSIERISLSVCVKAGESGKLFGTVTPQMIADGLKTKGFDVDRKQITIEEPIKALGKYEVSIKLYTDVVATLKLEVEGEAVEG.

The protein belongs to the bacterial ribosomal protein bL9 family.

In terms of biological role, binds to the 23S rRNA. The sequence is that of Large ribosomal subunit protein bL9 from Chloroherpeton thalassium (strain ATCC 35110 / GB-78).